Consider the following 226-residue polypeptide: Lipoprotein-releasing system ATP-binding protein LolD (226 aa).

In terms of domain architecture, ABC transporter spans 6–226 (VLISGLTKTF…KLYKGNLEEV (221 aa)). 42–49 (GESGSGKS) contributes to the ATP binding site.

The protein belongs to the ABC transporter superfamily. Lipoprotein translocase (TC 3.A.1.125) family. As to quaternary structure, the complex is composed of two ATP-binding proteins (LolD) and two transmembrane proteins (LolC and LolE).

It localises to the cell inner membrane. Functionally, part of the ABC transporter complex LolCDE involved in the translocation of mature outer membrane-directed lipoproteins, from the inner membrane to the periplasmic chaperone, LolA. Responsible for the formation of the LolA-lipoprotein complex in an ATP-dependent manner. In Treponema denticola (strain ATCC 35405 / DSM 14222 / CIP 103919 / JCM 8153 / KCTC 15104), this protein is Lipoprotein-releasing system ATP-binding protein LolD.